A 60-amino-acid polypeptide reads, in one-letter code: Short neurotoxin 1 (60 aa).

4 disulfides stabilise this stretch: cysteine 3-cysteine 22, cysteine 17-cysteine 39, cysteine 41-cysteine 52, and cysteine 53-cysteine 58.

It belongs to the three-finger toxin family. Short-chain subfamily. Type I alpha-neurotoxin sub-subfamily. Expressed by the venom gland.

Its subcellular location is the secreted. Functionally, binds to muscle nicotinic acetylcholine receptor (nAChR) and inhibit acetylcholine from binding to the receptor, thereby impairing neuromuscular transmission. This is Short neurotoxin 1 from Dendroaspis viridis (Western green mamba).